A 500-amino-acid chain; its full sequence is Cytochrome P450 2D26 (500 aa).

Serine 249 carries the post-translational modification Phosphoserine. A heme-binding site is contributed by cysteine 446.

It belongs to the cytochrome P450 family. It depends on heme as a cofactor.

Its subcellular location is the endoplasmic reticulum membrane. The protein resides in the microsome membrane. It carries out the reaction an organic molecule + reduced [NADPH--hemoprotein reductase] + O2 = an alcohol + oxidized [NADPH--hemoprotein reductase] + H2O + H(+). Functionally, cytochromes P450 are a group of heme-thiolate monooxygenases. In liver microsomes, this enzyme is involved in an NADPH-dependent electron transport pathway. It oxidizes a variety of structurally unrelated compounds, including steroids, fatty acids, and xenobiotics. This is Cytochrome P450 2D26 from Mus musculus (Mouse).